We begin with the raw amino-acid sequence, 420 residues long: Light-independent protochlorophyllide reductase subunit N (420 aa).

Positions 21, 46, and 103 each coordinate [4Fe-4S] cluster.

The protein belongs to the BchN/ChlN family. In terms of assembly, protochlorophyllide reductase is composed of three subunits; BchL, BchN and BchB. Forms a heterotetramer of two BchB and two BchN subunits. [4Fe-4S] cluster serves as cofactor.

The catalysed reaction is chlorophyllide a + oxidized 2[4Fe-4S]-[ferredoxin] + 2 ADP + 2 phosphate = protochlorophyllide a + reduced 2[4Fe-4S]-[ferredoxin] + 2 ATP + 2 H2O. It participates in porphyrin-containing compound metabolism; bacteriochlorophyll biosynthesis (light-independent). Its function is as follows. Component of the dark-operative protochlorophyllide reductase (DPOR) that uses Mg-ATP and reduced ferredoxin to reduce ring D of protochlorophyllide (Pchlide) to form chlorophyllide a (Chlide). This reaction is light-independent. The NB-protein (BchN-BchB) is the catalytic component of the complex. The sequence is that of Light-independent protochlorophyllide reductase subunit N from Chlorobium luteolum (strain DSM 273 / BCRC 81028 / 2530) (Pelodictyon luteolum).